The following is a 146-amino-acid chain: Nucleoside diphosphate kinase (146 aa).

6 residues coordinate ATP: Lys-11, Phe-59, Arg-87, Thr-93, Arg-104, and Asn-114. Residue His-117 is the Pros-phosphohistidine intermediate of the active site.

The protein belongs to the NDK family. As to quaternary structure, homotetramer. Mg(2+) serves as cofactor.

It is found in the cytoplasm. It carries out the reaction a 2'-deoxyribonucleoside 5'-diphosphate + ATP = a 2'-deoxyribonucleoside 5'-triphosphate + ADP. The enzyme catalyses a ribonucleoside 5'-diphosphate + ATP = a ribonucleoside 5'-triphosphate + ADP. Functionally, major role in the synthesis of nucleoside triphosphates other than ATP. The ATP gamma phosphate is transferred to the NDP beta phosphate via a ping-pong mechanism, using a phosphorylated active-site intermediate. In Anaeromyxobacter sp. (strain Fw109-5), this protein is Nucleoside diphosphate kinase.